A 264-amino-acid polypeptide reads, in one-letter code: ATP synthase subunit a (264 aa).

The next 6 membrane-spanning stretches (helical) occupy residues 29 to 49 (TWHIDSLLFSVGLGVLFLWIF), 87 to 107 (NALIAPLALTIFVWVFMMNFM), 134 to 154 (DLNITFSLALGVFLLIIYYSI), 177 to 197 (IPVNLLLESVTLIAKPISLAL), 208 to 228 (LIFILIALMYGANWLIASLGV), and 235 to 255 (LIFHILVITLQAFIFMMLTIV).

The protein belongs to the ATPase A chain family. F-type ATPases have 2 components, CF(1) - the catalytic core - and CF(0) - the membrane proton channel. CF(1) has five subunits: alpha(3), beta(3), gamma(1), delta(1), epsilon(1). CF(0) has three main subunits: a(1), b(2) and c(9-12). The alpha and beta chains form an alternating ring which encloses part of the gamma chain. CF(1) is attached to CF(0) by a central stalk formed by the gamma and epsilon chains, while a peripheral stalk is formed by the delta and b chains.

It localises to the cell inner membrane. Functionally, key component of the proton channel; it plays a direct role in the translocation of protons across the membrane. In Shewanella amazonensis (strain ATCC BAA-1098 / SB2B), this protein is ATP synthase subunit a.